The sequence spans 273 residues: Undecaprenyl-diphosphatase (273 aa).

Helical transmembrane passes span 4–24 (FLLLKGLILGIVEGLTEFLPI), 43–63 (KGKVFTIVIQLGAILAVCWEY), 83–103 (FVLNLLIAFLPAAILGLLFIK), 109–129 (LFHPVPVALAFIVGGLLILWA), 184–204 (ATEFSFFLAIPVMFAATFYDL), 218–238 (VFAIGFVASFISALLAVRGLL), and 248–268 (VFAWYRIGFGIIVLITAYSGM).

This sequence belongs to the UppP family.

Its subcellular location is the cell inner membrane. It catalyses the reaction di-trans,octa-cis-undecaprenyl diphosphate + H2O = di-trans,octa-cis-undecaprenyl phosphate + phosphate + H(+). Catalyzes the dephosphorylation of undecaprenyl diphosphate (UPP). Confers resistance to bacitracin. The chain is Undecaprenyl-diphosphatase from Nitrosospira multiformis (strain ATCC 25196 / NCIMB 11849 / C 71).